A 315-amino-acid polypeptide reads, in one-letter code: Putative methyltransferase SPBC8D2.16c (315 aa).

The protein belongs to the class IV-like SAM-binding methyltransferase superfamily.

Its subcellular location is the cytoplasm. The protein localises to the nucleus. This is Putative methyltransferase SPBC8D2.16c from Schizosaccharomyces pombe (strain 972 / ATCC 24843) (Fission yeast).